Here is a 307-residue protein sequence, read N- to C-terminus: UDP-3-O-acyl-N-acetylglucosamine deacetylase (307 aa).

Positions 78, 241, and 245 each coordinate Zn(2+). Residue histidine 268 is the Proton donor of the active site.

Belongs to the LpxC family. Zn(2+) is required as a cofactor.

The enzyme catalyses a UDP-3-O-[(3R)-3-hydroxyacyl]-N-acetyl-alpha-D-glucosamine + H2O = a UDP-3-O-[(3R)-3-hydroxyacyl]-alpha-D-glucosamine + acetate. It functions in the pathway glycolipid biosynthesis; lipid IV(A) biosynthesis; lipid IV(A) from (3R)-3-hydroxytetradecanoyl-[acyl-carrier-protein] and UDP-N-acetyl-alpha-D-glucosamine: step 2/6. In terms of biological role, catalyzes the hydrolysis of UDP-3-O-myristoyl-N-acetylglucosamine to form UDP-3-O-myristoylglucosamine and acetate, the committed step in lipid A biosynthesis. This chain is UDP-3-O-acyl-N-acetylglucosamine deacetylase, found in Polaromonas naphthalenivorans (strain CJ2).